The primary structure comprises 550 residues: Silent protein UshA(0) (550 aa).

The first 25 residues, 1 to 25, serve as a signal peptide directing secretion; that stretch reads MKFLKRGVALALLAAFALTTQPAQA. A divalent metal cation contacts are provided by aspartate 41, histidine 43, aspartate 84, asparagine 116, histidine 217, histidine 252, and glutamine 254. Residues cysteine 258 and cysteine 275 are joined by a disulfide bond. Residues phenylalanine 429 and 498 to 504 each bind substrate; that span reads FNATGGD.

The protein belongs to the 5'-nucleotidase family. Requires a divalent metal cation as cofactor.

It is found in the periplasm. This chain is Silent protein UshA(0) (ushA), found in Salmonella typhimurium (strain LT2 / SGSC1412 / ATCC 700720).